Consider the following 434-residue polypeptide: NFATC2-interacting protein (434 aa).

Disordered stretches follow at residues 1–63 (MGSP…TPAL) and 176–237 (GSED…RAYN). A compositionally biased stretch (pro residues) spans 28-59 (GPQPCPKPRGPQPCPKPRGPQPCPKPRGPQPC). Over residues 228–237 (PVRRKGRAYN) the composition is skewed to basic residues. A Ubiquitin-like domain is found at 275–351 (PELTVKVRRG…IDCVVLSPPD (77 aa)).

Its subcellular location is the nucleus. The protein resides in the cytoplasm. Regulates the magnitude of NFAT-driven transcription of a specific subset of cytokine genes. This is NFATC2-interacting protein (nfatc2ip) from Xenopus tropicalis (Western clawed frog).